The primary structure comprises 254 residues: Hydroxyacylglutathione hydrolase (254 aa).

The Zn(2+) site is built by His-52, His-54, Asp-56, His-57, His-109, Asp-126, and His-164.

The protein belongs to the metallo-beta-lactamase superfamily. Glyoxalase II family. In terms of assembly, monomer. Zn(2+) serves as cofactor.

The catalysed reaction is an S-(2-hydroxyacyl)glutathione + H2O = a 2-hydroxy carboxylate + glutathione + H(+). It functions in the pathway secondary metabolite metabolism; methylglyoxal degradation; (R)-lactate from methylglyoxal: step 2/2. Functionally, thiolesterase that catalyzes the hydrolysis of S-D-lactoyl-glutathione to form glutathione and D-lactic acid. The sequence is that of Hydroxyacylglutathione hydrolase from Stenotrophomonas maltophilia (strain R551-3).